A 223-amino-acid polypeptide reads, in one-letter code: Ribonuclease 3 (223 aa).

The RNase III domain occupies 3 to 125 (LERLQKKLGY…IIAAIYLDAG (123 aa)). Mg(2+) is bound at residue Glu38. Asp42 is an active-site residue. Residues Asp111 and Glu114 each contribute to the Mg(2+) site. Glu114 is a catalytic residue. In terms of domain architecture, DRBM spans 152–222 (DPKTRLQEFL…AEQVLAKLTT (71 aa)).

This sequence belongs to the ribonuclease III family. Homodimer. The cofactor is Mg(2+).

It is found in the cytoplasm. The catalysed reaction is Endonucleolytic cleavage to 5'-phosphomonoester.. Functionally, digests double-stranded RNA. Involved in the processing of primary rRNA transcript to yield the immediate precursors to the large and small rRNAs (23S and 16S). Processes some mRNAs, and tRNAs when they are encoded in the rRNA operon. Processes pre-crRNA and tracrRNA of type II CRISPR loci if present in the organism. The protein is Ribonuclease 3 of Actinobacillus pleuropneumoniae serotype 3 (strain JL03).